Here is a 71-residue protein sequence, read N- to C-terminus: UPF0352 protein Ssed_1809 (71 aa).

It belongs to the UPF0352 family.

The sequence is that of UPF0352 protein Ssed_1809 from Shewanella sediminis (strain HAW-EB3).